Reading from the N-terminus, the 235-residue chain is Small ribosomal subunit protein uS2c (235 aa).

It belongs to the universal ribosomal protein uS2 family.

It localises to the plastid. It is found in the chloroplast. This Zygnema circumcarinatum (Green alga) protein is Small ribosomal subunit protein uS2c (rps2).